A 450-amino-acid polypeptide reads, in one-letter code: Probable 1,4-beta-D-glucan cellobiohydrolase C (450 aa).

The signal sequence occupies residues 1–19 (MKHLASSIALTLLLPAVQA). One can recognise a CBM1 domain in the interval 20 to 55 (QQTVWGQCGGQGWSGPTNCVAGAACSTLNPYYAQCI). Disulfide bonds link Cys27–Cys44 and Cys38–Cys54. The thr-rich linker stretch occupies residues 59 to 90 (TATSTTLSTTTTTQTTTKPTTTGPTTSAPTVT). The interval 63-89 (TTLSTTTTTQTTTKPTTTGPTTSAPTV) is disordered. Residues 91–450 (ASGNPFSGYQ…QLLTNANPSF (360 aa)) form a catalytic region. Asp180 is an active-site residue. 2 cysteine pairs are disulfide-bonded: Cys181–Cys240 and Cys372–Cys419. The Proton donor role is filled by Asp226. Asp405 (nucleophile) is an active-site residue. A glycan (N-linked (GlcNAc...) asparagine) is linked at Asn409.

It belongs to the glycosyl hydrolase 6 (cellulase B) family.

Its subcellular location is the secreted. The enzyme catalyses Hydrolysis of (1-&gt;4)-beta-D-glucosidic linkages in cellulose and cellotetraose, releasing cellobiose from the non-reducing ends of the chains.. Functionally, the biological conversion of cellulose to glucose generally requires three types of hydrolytic enzymes: (1) Endoglucanases which cut internal beta-1,4-glucosidic bonds; (2) Exocellobiohydrolases that cut the disaccharide cellobiose from the non-reducing end of the cellulose polymer chain; (3) Beta-1,4-glucosidases which hydrolyze the cellobiose and other short cello-oligosaccharides to glucose. This chain is Probable 1,4-beta-D-glucan cellobiohydrolase C (cbhC), found in Neosartorya fischeri (strain ATCC 1020 / DSM 3700 / CBS 544.65 / FGSC A1164 / JCM 1740 / NRRL 181 / WB 181) (Aspergillus fischerianus).